The following is a 348-amino-acid chain: Dihydroorotase (348 aa).

Zn(2+) contacts are provided by His17 and His19. Residues 19-21 (HLR) and Asn45 each bind substrate. 3 residues coordinate Zn(2+): Lys103, His140, and His178. The residue at position 103 (Lys103) is an N6-carboxylysine. His140 contacts substrate. Leu223 is a binding site for substrate. Asp251 lines the Zn(2+) pocket. Asp251 is a catalytic residue. His255 and Ala267 together coordinate substrate.

The protein belongs to the metallo-dependent hydrolases superfamily. DHOase family. Class II DHOase subfamily. In terms of assembly, homodimer. The cofactor is Zn(2+).

It carries out the reaction (S)-dihydroorotate + H2O = N-carbamoyl-L-aspartate + H(+). The protein operates within pyrimidine metabolism; UMP biosynthesis via de novo pathway; (S)-dihydroorotate from bicarbonate: step 3/3. Catalyzes the reversible cyclization of carbamoyl aspartate to dihydroorotate. This Escherichia coli (strain SMS-3-5 / SECEC) protein is Dihydroorotase.